The sequence spans 101 residues: uncharacterized protein (101 aa).

The protein resides in the mitochondrion. This is an uncharacterized protein from Arabidopsis thaliana (Mouse-ear cress).